We begin with the raw amino-acid sequence, 164 residues long: Phosphopantetheine adenylyltransferase (164 aa).

Residue Ser9 coordinates substrate. ATP-binding positions include 9–10 and His17; that span reads SF. Residues Lys41, Leu73, and Lys87 each contribute to the substrate site. Residues 88–90, Glu98, and 123–129 each bind ATP; these read GLR and NSFLSSS.

This sequence belongs to the bacterial CoaD family. Homohexamer. Mg(2+) serves as cofactor.

Its subcellular location is the cytoplasm. The enzyme catalyses (R)-4'-phosphopantetheine + ATP + H(+) = 3'-dephospho-CoA + diphosphate. Its pathway is cofactor biosynthesis; coenzyme A biosynthesis; CoA from (R)-pantothenate: step 4/5. Functionally, reversibly transfers an adenylyl group from ATP to 4'-phosphopantetheine, yielding dephospho-CoA (dPCoA) and pyrophosphate. In Clostridium kluyveri (strain ATCC 8527 / DSM 555 / NBRC 12016 / NCIMB 10680 / K1), this protein is Phosphopantetheine adenylyltransferase.